A 475-amino-acid chain; its full sequence is MVVHITTDNDIGVRITLRRMLLLTLVTYIVYIAYNQRDILHINRLAVLALSFVAYLAWESIGIQYSNFTLLNDWFQYTPGNAPIVLLLIILVITLLVYLTTTQRYITPNKWIALLMLVNLIGLILFPMVNDLIPLYVIIELQSYSLYLLTGVYNKSYNATRAAILYFVTGGIASVLILLSSAEVYEATGLTNLSEISTYYSISGINTWTSFDILLIALVFKMGLAPLHAWSISVYSYAPLYITAYISIVAKVSIMSFIYLNIHLFSTQLLILAFYLSVAVAAYTPLYQVNIKSILAYSGILNFGYLLTAVLTNDNAYYIYIIQYSLTHVTIFLCILAITEYTNKPASYWSPIVNVNQLVVPNKALCIALIVCLFSLIGIPPLPGFYGKYYIIVGLMSNGLNLEALTIIVFSVIATYYYAYIIKQLASNLYNNNTNVIATPINSTLGFIISILMVILITFYMYLPTLLDGLTLLHS.

13 helical membrane passes run Leu-45–Tyr-65, Ala-82–Thr-102, Ile-112–Leu-132, Ile-133–Tyr-153, Ala-162–Ala-182, Thr-198–Phe-220, Leu-240–Leu-260, Ile-262–Ala-282, Ile-291–Leu-311, Tyr-318–Ile-338, Leu-365–Phe-385, Leu-402–Ile-422, and Phe-447–Leu-467.

It belongs to the complex I subunit 2 family.

The protein localises to the mitochondrion inner membrane. It carries out the reaction a ubiquinone + NADH + 5 H(+)(in) = a ubiquinol + NAD(+) + 4 H(+)(out). Functionally, core subunit of the mitochondrial membrane respiratory chain NADH dehydrogenase (Complex I) that is believed to belong to the minimal assembly required for catalysis. Complex I functions in the transfer of electrons from NADH to the respiratory chain. The immediate electron acceptor for the enzyme is believed to be ubiquinone. The chain is NADH-ubiquinone oxidoreductase chain 2 (NAD2) from Candida albicans (strain SC5314 / ATCC MYA-2876) (Yeast).